The sequence spans 186 residues: Large ribosomal subunit protein bL9 (186 aa).

The segment covering P151 to E167 has biased composition (basic and acidic residues). The disordered stretch occupies residues P151 to A186. A compositionally biased stretch (acidic residues) spans S168–E180.

The protein belongs to the bacterial ribosomal protein bL9 family.

Functionally, binds to the 23S rRNA. The polypeptide is Large ribosomal subunit protein bL9 (Acidiphilium cryptum (strain JF-5)).